The primary structure comprises 491 residues: NADH-ubiquinone oxidoreductase chain 4 (491 aa).

14 helical membrane passes run 2–22, 37–57, 89–109, 114–134, 139–159, 169–189, 215–235, 245–265, 271–291, 308–328, 332–352, 372–392, 412–432, and 457–477; these read IFHK…IINV, ALEW…AFDM, ISLF…LISW, FLLK…MGVF, LLLF…LIGV, ASYY…LGIF, WIFA…PFHI, PVSG…YGFL, ILPA…VIAI, IAYS…THTI, VAAV…FIAV, FSMP…MAIP, IVIG…SLYL, and IAIS…SLII.

Belongs to the complex I subunit 4 family.

Its subcellular location is the mitochondrion membrane. It carries out the reaction a ubiquinone + NADH + 5 H(+)(in) = a ubiquinol + NAD(+) + 4 H(+)(out). Core subunit of the mitochondrial membrane respiratory chain NADH dehydrogenase (Complex I) that is believed to belong to the minimal assembly required for catalysis. Complex I functions in the transfer of electrons from NADH to the respiratory chain. The immediate electron acceptor for the enzyme is believed to be ubiquinone. The sequence is that of NADH-ubiquinone oxidoreductase chain 4 (ND4) from Metridium senile (Brown sea anemone).